The sequence spans 99 residues: Nucleoid-associated protein SEQ_0368 (99 aa).

This sequence belongs to the YbaB/EbfC family. Homodimer.

Its subcellular location is the cytoplasm. It localises to the nucleoid. Its function is as follows. Binds to DNA and alters its conformation. May be involved in regulation of gene expression, nucleoid organization and DNA protection. The protein is Nucleoid-associated protein SEQ_0368 of Streptococcus equi subsp. equi (strain 4047).